The sequence spans 435 residues: MAAQTTEKLQKLDLNGQSGDAKADAPAAGQAEAGEAEEDSDDEKDDGNAAPEAGAGGAAKKKKRKSKKKKKGGAKVQSSPPRVPVSNLFPNNQYPEGEIVEYTNENSYRTTNEEKRYLDRMNNDFLQEYRQAAEVHRQVRQYAQKNIKPGQTLTEIAEGIEDAVRALTGHQGLEEGDNLKGGMGFPCGLSINHCAAHYTPNAGNKMVLQQGDVMKVDFGAQINGRIVDSAFTMTFDPVYDPLLEAVKDATNTGIREAGIDVRMSDIGAAIQEAMESYEIELNGTMYPVKCIRNLNGHNIDQHVIHGGKSVPIVKGGDQTKMEEGETFAIETFGSTGKGYVREDMETSHYALVPDAPSVPLRLSSAKNLLNVINKNFGTLPFCRRYLDRLGQDKYLLGLNNLVSSGIVQDYPPLCDIKGSYTAQFEHVQIPSHSHP.

Positions 1 to 92 (MAAQTTEKLQ…VPVSNLFPNN (92 aa)) are disordered. Residues 24-33 (DAPAAGQAEA) show a composition bias toward low complexity. Over residues 34 to 45 (GEAEEDSDDEKD) the composition is skewed to acidic residues. Positions 59-73 (AKKKKRKSKKKKKGG) are enriched in basic residues. His-197 is a substrate binding site. Residues Asp-217, Asp-228, and His-297 each coordinate a divalent metal cation. His-305 lines the substrate pocket. Residues Glu-330 and Glu-425 each contribute to the a divalent metal cation site.

This sequence belongs to the peptidase M24A family. Methionine aminopeptidase eukaryotic type 2 subfamily. It depends on Co(2+) as a cofactor. Requires Zn(2+) as cofactor. Mn(2+) is required as a cofactor. The cofactor is Fe(2+).

It is found in the cytoplasm. It catalyses the reaction Release of N-terminal amino acids, preferentially methionine, from peptides and arylamides.. Functionally, cotranslationally removes the N-terminal methionine from nascent proteins. The N-terminal methionine is often cleaved when the second residue in the primary sequence is small and uncharged (Met-Ala-, Cys, Gly, Pro, Ser, Thr, or Val). The protein is Methionine aminopeptidase 2-2 of Aspergillus clavatus (strain ATCC 1007 / CBS 513.65 / DSM 816 / NCTC 3887 / NRRL 1 / QM 1276 / 107).